A 172-amino-acid chain; its full sequence is Signal peptidase complex catalytic subunit SEC11 (172 aa).

Residues 1–14 lie on the Cytoplasmic side of the membrane; sequence MLSSLGNPRQAAAQ. A helical; Signal-anchor for type II membrane protein membrane pass occupies residues 15 to 35; it reads LMNFALILSTAFMMWKGLSVI. Over 36–172 the chain is Lumenal; that stretch reads TDSPSPIVVV…MGLLVVLQRE (137 aa). Residues S49 and H90 each act as charge relay system in the active site. N111 is a glycosylation site (N-linked (GlcNAc...) asparagine). Catalysis depends on D115, which acts as the Charge relay system. Positions 158 to 169 are C-terminal short (CTS) helix; it reads VMLGIMGLLVVL.

The protein belongs to the peptidase S26B family. Component of the signal peptidase complex (SPC) composed of a catalytic subunit SEC11 and three accessory subunits SPC1, SPC2 and SPC3. The complex induces a local thinning of the ER membrane which is used to measure the length of the signal peptide (SP) h-region of protein substrates. This ensures the selectivity of the complex towards h-regions shorter than 18-20 amino acids. SPC associates with the translocon complex.

It is found in the endoplasmic reticulum membrane. The enzyme catalyses Cleavage of hydrophobic, N-terminal signal or leader sequences from secreted and periplasmic proteins.. Its function is as follows. Catalytic component of the signal peptidase complex (SPC) which catalyzes the cleavage of N-terminal signal sequences from nascent proteins as they are translocated into the lumen of the endoplasmic reticulum. Specifically cleaves N-terminal signal peptides that contain a hydrophobic alpha-helix (h-region) shorter than 18-20 amino acids. The protein is Signal peptidase complex catalytic subunit SEC11 (SEC11) of Fusarium vanettenii (strain ATCC MYA-4622 / CBS 123669 / FGSC 9596 / NRRL 45880 / 77-13-4) (Fusarium solani subsp. pisi).